The following is a 397-amino-acid chain: MGFLKVLATSLATLAVVDAGTLLTASNTDAVIPSSYIVVMNDDVSTAEFNTHREWATNVHARLSRRKNGETGPGKHFEINGLKGYTASFDESTAKDIANDPAVKYIEPDMIVNATANVVQSNVPSWGLARISSKRTGTTSYTYDSTAGEGVVFYGVDTGIDISHSDFGGRAKWGTNVVDNDNTDGNGHGTHTASTAAGSKYGVAKKATLVAVKVLGADGSGTNSGVISGMDWAVKDAKSRGANGKYVMNMSLGGEFSKAVNDAAANVVKSGIFLSVAAGNEAENASNSSPASAAEVCTIAASTSTDGSASFTNFGSVVDLYAPGQSITAAYPGGGSKTLSGTSMAAPHVAGVAAYLMALEGVSAGNACARIVQLATSSISRAPSGTTSKLLYNGINV.

Residues 1–19 form the signal peptide; the sequence is MGFLKVLATSLATLAVVDA. Positions 20-115 are cleaved as a propeptide — removed in mature form; that stretch reads GTLLTASNTD…IEPDMIVNAT (96 aa). Positions 35–113 constitute an Inhibitor I9 domain; it reads SYIVVMNDDV…KYIEPDMIVN (79 aa). Residues 125-397 form the Peptidase S8 domain; the sequence is SWGLARISSK…SKLLYNGINV (273 aa). Residues Asp157, His188, and Ser343 each act as charge relay system in the active site.

It belongs to the peptidase S8 family.

It localises to the secreted. With respect to regulation, inhibited by 0.1 mM diisopropyl fluorophosphate (DFP), phenylmethanesulfonyl fluoride (PMSF), chymostatin and elastatinal. Not inhibited by N-alpha-p-tosyl-L-lysine chloromethylketone (TLCK), N-tosyl-L-phenylalanyl chloromethyl ketone (TPCK) or N-carbobenzoxy-L-phenylalanine chloromethylketone (ZPCK). Functionally, serine protease. Hydrolyzes azocasein. Cleaves peptide bonds of the oxidized insulin B chain preferably at 15-Leu-|-Tyr-16, but also at 4-Gln-|-His-5 and 24-Phe-|-Phe-25, and to a lesser extent at 5-His-|-Leu-6 and 25-Phe-|-Tyr-26. Hydrolyzes amide bonds between amino acids and 7-amino-4-methylcoumarin (AMC) in vitro. This Penicillium citrinum protein is Subtilisin-like serine protease Pen c 1.